The following is a 1012-amino-acid chain: Multiple C2 domain and transmembrane region protein 10 (1012 aa).

In terms of domain architecture, C2 1 spans 1-115 (MTEAKTGTGN…REGESVVQLY (115 aa)). Positions 141–203 (ENGENVRRVN…SQQNGQGQRM (63 aa)) are disordered. The span at 148 to 160 (RVNRSGGSKKSKK) shows a compositional bias: basic residues. Composition is skewed to low complexity over residues 161 to 180 (VQNVSSSMAIQQQQQQQQQQ) and 188 to 202 (RGNQQQSQQNGQGQR). C2 domains are found at residues 262-376 (SSHK…PQWY), 411-551 (KAGN…SRWF), and 585-710 (YNSD…THSY). Positions 296, 344, 346, and 349 each coordinate Ca(2+). The next 3 membrane-spanning stretches (helical) occupy residues 810–830 (FFRLVNVISGLVAVAKLVEVM), 841–861 (VFVLAFLFMVLFPELLLPCLL), and 952–972 (ATFLFLMFCLLAAVGFYTVPV).

This sequence belongs to the MCTP family. Ca(2+) serves as cofactor. As to expression, highly expressed in roots meristems, shoot apical meristems (SAMs) and in incipient leaf primordia. Observed in flowers.

It localises to the endoplasmic reticulum membrane. Its function is as follows. May function as a signaling molecule by regulating the trafficking of other regulators. In Arabidopsis thaliana (Mouse-ear cress), this protein is Multiple C2 domain and transmembrane region protein 10.